The chain runs to 51 residues: rpoE leader peptide (51 aa).

A short protein whose stop codon overlaps with the start codon of downstream rpoE; a premature stop codon at position 12 results in decreased expression of ECF sigma factor RpoE, thus they are translationally coupled. The chain is rpoE leader peptide from Escherichia coli (strain K12).